The primary structure comprises 429 residues: tRNA (guanine(9)-N1)-methyltransferase (429 aa).

Residues 131 to 379 (KERKEAQRRI…AVIPIRKYAP (249 aa)) enclose the SAM-dependent MTase TRM10-type domain. S-adenosyl-L-methionine is bound by residues 285–286 (LS), Gly-305, 309–313 (DRNRH), Cys-317, Leu-331, and 344–346 (KAL). Asp-309 functions as the Proton acceptor in the catalytic mechanism. The segment at 383–429 (AKRAKTETKRNEKVEEEVECTSAEGEEDIGVIEESAEVDPEDVFSNQ) is disordered. Residues 386-395 (AKTETKRNEK) show a composition bias toward basic and acidic residues. Over residues 396–429 (VEEEVECTSAEGEEDIGVIEESAEVDPEDVFSNQ) the composition is skewed to acidic residues.

This sequence belongs to the class IV-like SAM-binding methyltransferase superfamily. TRM10 family. In terms of assembly, monomer.

The protein resides in the cytoplasm. The protein localises to the nucleus. It carries out the reaction guanosine(9) in tRNA + S-adenosyl-L-methionine = N(1)-methylguanosine(9) in tRNA + S-adenosyl-L-homocysteine + H(+). S-adenosyl-L-methionine-dependent guanine N(1)-methyltransferase that catalyzes the formation of N(1)-methylguanine at position 9 (m1G9) in cytoplasmic tRNA. The chain is tRNA (guanine(9)-N1)-methyltransferase from Cryptococcus neoformans var. neoformans serotype D (strain B-3501A) (Filobasidiella neoformans).